The chain runs to 342 residues: Polyprenyl transferase trt2 (342 aa).

The next 9 membrane-spanning stretches (helical) occupy residues 71 to 91 (VVGV…TVLL), 95 to 115 (IILS…NDLI), 141 to 161 (AALL…LLPS), 163 to 183 (CTVE…GKRF), 187 to 207 (PQLI…SLEV), 216 to 236 (TLSM…VYAC), 261 to 278 (LAYG…LGGV), 282 to 304 (LGLP…FLSV), and 319 to 339 (AKSS…LEYL).

Belongs to the UbiA prenyltransferase family. Requires Mg(2+) as cofactor.

It localises to the membrane. It carries out the reaction 3,5-dimethylorsellinate + (2E,6E)-farnesyl diphosphate = (3R)-3-farnesyl-6-hydroxy-2,3,5-trimethyl-4-oxocyclohexa-1,5-diene-1-carboxylate + diphosphate + H(+). It participates in secondary metabolite biosynthesis; terpenoid biosynthesis. Polyprenyl transferase; part of the gene cluster that mediates the biosynthesis of terretonin, a fungal meroterpenoid that acts as a mycotoxin. The first step of the pathway is the synthesis of 3,5-dimethylorsellinic acid (DMOA) by the polyketide synthase trt4. DMOA is then prenylated into farnesyl-DMOA by the polyprenyl transferase trt2. Methylation by the methyltransferase trt5 then leads to farnesyl-DMOA methyl ester which is further subject to epoxidation by the FAD-dependent monooxygenase trt8 to yield epoxyfarnesyl-DMOA methyl ester. Cyclization of epoxyfarnesyl-DMOA methyl ester by the terpene cyclase trt1 leads to a tetracycle intermediate which is in turn converted to preterretonin. Dehydrogenase trt9 comes next to transform preterretonin to preterrenoid. The FAD-dependent monooxygenase trt3 is then required for the C-hydroxylation at C16 of preterrenoid to yield terrenoid. The cytochrome P450 trt6 catalyzes three successive oxidations to transform terrenoid into an unstable intermediate, which then undergoes the D-ring expansion and unusual rearrangement of the methoxy group to afford the core skeleton of terretonin. Trt14 catalyzes the D-ring expansion of terretonin involving intramolecular methoxy rearrangement as well as the hydrolysis of the expanded D-ring and the methyl ester moiety. Finally, the nonheme iron-dependent dioxygenase trt7 accomplishes the last two oxidation reactions steps to complete the biosynthesis of terretonin. Terretonin C is produced via spontaneous decarboxylation of the terretonin precursor. Another shunt product of the terretonin biosynthesis is dihydrofarnesyl-DMOA, derived from epoxyfarnesyl-DMOA through hydrolysis of the epoxide. The protein is Polyprenyl transferase trt2 of Aspergillus terreus (strain NIH 2624 / FGSC A1156).